We begin with the raw amino-acid sequence, 732 residues long: Probable ATP-dependent RNA helicase DHX35 homolog (732 aa).

The segment at M1–A50 is disordered. The 165-residue stretch at L87–D251 folds into the Helicase ATP-binding domain. Position 100–107 (G100–S107) interacts with ATP. The DEAH box signature appears at D198–H201. The Helicase C-terminal domain occupies A283–G457.

Belongs to the DEAD box helicase family. DEAH subfamily.

The catalysed reaction is ATP + H2O = ADP + phosphate + H(+). This Caenorhabditis elegans protein is Probable ATP-dependent RNA helicase DHX35 homolog.